The following is a 1071-amino-acid chain: DNA-directed RNA polymerase subunit beta (1071 aa).

The protein belongs to the RNA polymerase beta chain family. In plastids the minimal PEP RNA polymerase catalytic core is composed of four subunits: alpha, beta, beta', and beta''. When a (nuclear-encoded) sigma factor is associated with the core the holoenzyme is formed, which can initiate transcription.

The protein resides in the plastid. It localises to the chloroplast. The enzyme catalyses RNA(n) + a ribonucleoside 5'-triphosphate = RNA(n+1) + diphosphate. Its function is as follows. DNA-dependent RNA polymerase catalyzes the transcription of DNA into RNA using the four ribonucleoside triphosphates as substrates. This chain is DNA-directed RNA polymerase subunit beta, found in Panax ginseng (Korean ginseng).